The following is a 274-amino-acid chain: Elongation factor Ts (274 aa).

Residues 76 to 79 (TDFV) are involved in Mg(2+) ion dislocation from EF-Tu.

The protein belongs to the EF-Ts family.

It localises to the cytoplasm. In terms of biological role, associates with the EF-Tu.GDP complex and induces the exchange of GDP to GTP. It remains bound to the aminoacyl-tRNA.EF-Tu.GTP complex up to the GTP hydrolysis stage on the ribosome. This is Elongation factor Ts from Mycobacterium sp. (strain JLS).